Consider the following 118-residue polypeptide: Large ribosomal subunit protein bL19 (118 aa).

It belongs to the bacterial ribosomal protein bL19 family.

This protein is located at the 30S-50S ribosomal subunit interface and may play a role in the structure and function of the aminoacyl-tRNA binding site. The protein is Large ribosomal subunit protein bL19 of Buchnera aphidicola subsp. Baizongia pistaciae (strain Bp).